The following is a 75-amino-acid chain: uncharacterized protein (75 aa).

This is an uncharacterized protein from Treponema pallidum (strain Nichols).